Reading from the N-terminus, the 114-residue chain is Iron-sulfur cluster insertion protein ErpA (114 aa).

Residues Cys-42, Cys-106, and Cys-108 each contribute to the iron-sulfur cluster site.

This sequence belongs to the HesB/IscA family. In terms of assembly, homodimer. Iron-sulfur cluster serves as cofactor.

Its function is as follows. Required for insertion of 4Fe-4S clusters for at least IspG. The polypeptide is Iron-sulfur cluster insertion protein ErpA (Klebsiella pneumoniae (strain 342)).